Reading from the N-terminus, the 341-residue chain is 1-aminocyclopropane-1-carboxylate deaminase (341 aa).

At S1 the chain carries N-acetylserine. Residue K51 is modified to N6-(pyridoxal phosphate)lysine. S78 (nucleophile) is an active-site residue.

The protein belongs to the ACC deaminase/D-cysteine desulfhydrase family. Homodimer. Pyridoxal 5'-phosphate serves as cofactor.

The catalysed reaction is 1-aminocyclopropane-1-carboxylate + H2O = 2-oxobutanoate + NH4(+). Catalyzes a cyclopropane ring-opening reaction, the irreversible conversion of 1-aminocyclopropane-1-carboxylate (ACC) to ammonia and alpha-ketobutyrate. The sequence is that of 1-aminocyclopropane-1-carboxylate deaminase from Cyberlindnera saturnus (Yeast).